An 874-amino-acid polypeptide reads, in one-letter code: Protein translocase subunit SecA (874 aa).

ATP contacts are provided by residues Q87, 105–109 (GEGKT), and D512. Zn(2+)-binding residues include C859, C861, C870, and H871.

The protein belongs to the SecA family. In terms of assembly, monomer and homodimer. Part of the essential Sec protein translocation apparatus which comprises SecA, SecYEG and auxiliary proteins SecDF-YajC and YidC. Requires Zn(2+) as cofactor.

It localises to the cell inner membrane. The protein resides in the cytoplasm. The enzyme catalyses ATP + H2O + cellular proteinSide 1 = ADP + phosphate + cellular proteinSide 2.. Part of the Sec protein translocase complex. Interacts with the SecYEG preprotein conducting channel. Has a central role in coupling the hydrolysis of ATP to the transfer of proteins into and across the cell membrane, serving both as a receptor for the preprotein-SecB complex and as an ATP-driven molecular motor driving the stepwise translocation of polypeptide chains across the membrane. This chain is Protein translocase subunit SecA, found in Buchnera aphidicola subsp. Schizaphis graminum (strain Sg).